Reading from the N-terminus, the 426-residue chain is Phosphoribosylamine--glycine ligase (426 aa).

The 208-residue stretch at 113-320 (KSLMTEAKIP…LLELLYRAST (208 aa)) folds into the ATP-grasp domain. 139-200 (LESKSIPIVI…EEFMEGQEAS (62 aa)) serves as a coordination point for ATP. Residues Glu290 and Asn292 each coordinate Mg(2+).

This sequence belongs to the GARS family. The cofactor is Mg(2+). It depends on Mn(2+) as a cofactor.

It catalyses the reaction 5-phospho-beta-D-ribosylamine + glycine + ATP = N(1)-(5-phospho-beta-D-ribosyl)glycinamide + ADP + phosphate + H(+). The protein operates within purine metabolism; IMP biosynthesis via de novo pathway; N(1)-(5-phospho-D-ribosyl)glycinamide from 5-phospho-alpha-D-ribose 1-diphosphate: step 2/2. The chain is Phosphoribosylamine--glycine ligase from Leptospira interrogans serogroup Icterohaemorrhagiae serovar copenhageni (strain Fiocruz L1-130).